We begin with the raw amino-acid sequence, 668 residues long: Probable 6-phosphofructo-2-kinase PB17E12.14c (668 aa).

A compositionally biased stretch (basic and acidic residues) spans 1 to 14 (MSNNNNKDDSELQS). Disordered stretches follow at residues 1-105 (MSNN…GSRP) and 136-185 (HRVP…EATN). Composition is skewed to polar residues over residues 46–56 (NDHSFTNTDSV), 65–86 (SPVS…QNSP), and 164–184 (SSMS…SEAT). 197–204 (GLPARGKS) provides a ligand contact to ATP. Catalysis depends on residues Asp-281 and Cys-312. Position 346 (Arg-346) interacts with beta-D-fructose 6-phosphate. Glu-540 is a catalytic residue. Residue His-608 is the Proton donor of the active site.

The enzyme catalyses beta-D-fructose 6-phosphate + ATP = beta-D-fructose 2,6-bisphosphate + ADP + H(+). Functionally, synthesis of fructose 2,6-bisphosphate. This chain is Probable 6-phosphofructo-2-kinase PB17E12.14c, found in Schizosaccharomyces pombe (strain 972 / ATCC 24843) (Fission yeast).